A 248-amino-acid chain; its full sequence is Acetylglutamate kinase (248 aa).

Residues 36–37, Arg58, and Asn147 contribute to the substrate site; that span reads GG.

The protein belongs to the acetylglutamate kinase family. ArgB subfamily.

It localises to the cytoplasm. It catalyses the reaction N-acetyl-L-glutamate + ATP = N-acetyl-L-glutamyl 5-phosphate + ADP. It participates in amino-acid biosynthesis; L-arginine biosynthesis; N(2)-acetyl-L-ornithine from L-glutamate: step 2/4. In terms of biological role, catalyzes the ATP-dependent phosphorylation of N-acetyl-L-glutamate. This Thermus thermophilus (strain ATCC BAA-163 / DSM 7039 / HB27) protein is Acetylglutamate kinase.